The primary structure comprises 189 residues: Keratin-associated protein 5-2 (189 aa).

8 consecutive repeat copies span residues 21 to 24 (CCKP), 27 to 30 (CCKP), 33 to 36 (CCVP), 134 to 137 (CCKP), 144 to 147 (CCKP), 159 to 162 (CCKP), 169 to 172 (CCKP), and 179 to 182 (CCAP). Residues 27–182 (CCKPVCCCVP…CCCQSSCCAP (156 aa)) form an 8 X 4 AA repeats of C-C-X-P region.

Belongs to the KRTAP type 5 family. In terms of assembly, interacts with hair keratins.

In the hair cortex, hair keratin intermediate filaments are embedded in an interfilamentous matrix, consisting of hair keratin-associated protein (KRTAP), which are essential for the formation of a rigid and resistant hair shaft through their extensive disulfide bond cross-linking with abundant cysteine residues of hair keratins. The matrix proteins include the high-sulfur and high-glycine-tyrosine keratins. The polypeptide is Keratin-associated protein 5-2 (Mus musculus (Mouse)).